A 309-amino-acid polypeptide reads, in one-letter code: Protein FdhE (309 aa).

This sequence belongs to the FdhE family.

The protein resides in the cytoplasm. Functionally, necessary for formate dehydrogenase activity. In Escherichia coli O139:H28 (strain E24377A / ETEC), this protein is Protein FdhE.